The chain runs to 219 residues: LexA repressor (219 aa).

The H-T-H motif DNA-binding region spans 28–48 (RAEIAAELGFRSANAAEEHLQ). Active-site for autocatalytic cleavage activity residues include serine 138 and lysine 175.

This sequence belongs to the peptidase S24 family. Homodimer.

It catalyses the reaction Hydrolysis of Ala-|-Gly bond in repressor LexA.. Functionally, represses a number of genes involved in the response to DNA damage (SOS response), including recA and lexA. In the presence of single-stranded DNA, RecA interacts with LexA causing an autocatalytic cleavage which disrupts the DNA-binding part of LexA, leading to derepression of the SOS regulon and eventually DNA repair. This is LexA repressor from Herminiimonas arsenicoxydans.